Reading from the N-terminus, the 240-residue chain is Uridylate kinase (240 aa).

13-16 serves as a coordination point for ATP; that stretch reads KFSG. Residue glycine 55 participates in UMP binding. Residues glycine 56 and arginine 60 each contribute to the ATP site. UMP contacts are provided by residues aspartate 76 and 137-144; that span reads TGNPFFTT. ATP is bound by residues threonine 164, tyrosine 170, and aspartate 173.

It belongs to the UMP kinase family. In terms of assembly, homohexamer.

Its subcellular location is the cytoplasm. It catalyses the reaction UMP + ATP = UDP + ADP. It participates in pyrimidine metabolism; CTP biosynthesis via de novo pathway; UDP from UMP (UMPK route): step 1/1. Its activity is regulated as follows. Inhibited by UTP. Functionally, catalyzes the reversible phosphorylation of UMP to UDP. The chain is Uridylate kinase from Helicobacter pylori (strain J99 / ATCC 700824) (Campylobacter pylori J99).